The primary structure comprises 159 residues: Siroheme decarboxylase beta subunit (159 aa).

A substrate-binding site is contributed by 152-157 (KTSMTY).

It belongs to the Ahb/Nir family. As to quaternary structure, forms a heterodimer composed of AhbA and AhbB.

It catalyses the reaction siroheme + 2 H(+) = 12,18-didecarboxysiroheme + 2 CO2. The protein operates within porphyrin-containing compound metabolism; protoheme biosynthesis. Functionally, involved in siroheme-dependent heme b biosynthesis. Catalyzes the decarboxylation of siroheme into didecarboxysiroheme. Siroheme is decarboxylated to monodecarboxysiroheme, which is in turn decarboxylated to didecarboxysiroheme. This Desulfovibrio desulfuricans (strain ATCC 27774 / DSM 6949 / MB) protein is Siroheme decarboxylase beta subunit.